The sequence spans 185 residues: NADH-quinone oxidoreductase subunit B (185 aa).

The [4Fe-4S] cluster site is built by C38, C39, C104, and C133.

It belongs to the complex I 20 kDa subunit family. As to quaternary structure, NDH-1 is composed of 14 different subunits. Subunits NuoB, C, D, E, F, and G constitute the peripheral sector of the complex. The cofactor is [4Fe-4S] cluster.

Its subcellular location is the cell membrane. It carries out the reaction a quinone + NADH + 5 H(+)(in) = a quinol + NAD(+) + 4 H(+)(out). Functionally, NDH-1 shuttles electrons from NADH, via FMN and iron-sulfur (Fe-S) centers, to quinones in the respiratory chain. The immediate electron acceptor for the enzyme in this species is believed to be a menaquinone. Couples the redox reaction to proton translocation (for every two electrons transferred, four hydrogen ions are translocated across the cytoplasmic membrane), and thus conserves the redox energy in a proton gradient. This is NADH-quinone oxidoreductase subunit B from Cutibacterium acnes (strain DSM 16379 / KPA171202) (Propionibacterium acnes).